A 215-amino-acid chain; its full sequence is Chymomexicain (215 aa).

Intrachain disulfides connect Cys22-Cys63, Cys56-Cys96, and Cys154-Cys201. Cys25 is an active-site residue. Catalysis depends on residues His160 and Asn176.

Belongs to the peptidase C1 family.

Its function is as follows. Cysteine protease. This chain is Chymomexicain, found in Jacaratia mexicana (Wild papaya).